Reading from the N-terminus, the 330-residue chain is MKIVVLGAGAWGTALAMSAAAHAACHEVTLWARDAQQAQAMQAKRQNQRYLPGLAFPPGLHVASGDMGALAADADLVVVGTPMAALRGMLERLDGCAAPIAWLCKGFEADTGLMAHEVCAQVAPRLHSGVFSGPSFAQEVATAQPTAMVAASPRATVRDALVQAFHGPALRVYASEDIVGVEVGGAVKNVLAIATGLCDGLQLGMNARAALITRGLAEMTRLGLALGARPETFMGLSGLGDLVLTATGDLSRNRRVGLLLAEGRTLAQAVESLGHVAEGVYSARTVVQRARAVGVEMPIAECVVALLDGELRAAEAVARLMEREPTVERH.

NADPH contacts are provided by Trp11, Arg33, and Lys105. Lys105, Gly133, and Ser135 together coordinate sn-glycerol 3-phosphate. Ala137 contacts NADPH. Lys188, Asp241, Ser251, Arg252, and Asn253 together coordinate sn-glycerol 3-phosphate. Lys188 (proton acceptor) is an active-site residue. Arg252 is an NADPH binding site. Positions 276 and 278 each coordinate NADPH.

This sequence belongs to the NAD-dependent glycerol-3-phosphate dehydrogenase family.

It localises to the cytoplasm. The enzyme catalyses sn-glycerol 3-phosphate + NAD(+) = dihydroxyacetone phosphate + NADH + H(+). The catalysed reaction is sn-glycerol 3-phosphate + NADP(+) = dihydroxyacetone phosphate + NADPH + H(+). Its pathway is membrane lipid metabolism; glycerophospholipid metabolism. Catalyzes the reduction of the glycolytic intermediate dihydroxyacetone phosphate (DHAP) to sn-glycerol 3-phosphate (G3P), the key precursor for phospholipid synthesis. The protein is Glycerol-3-phosphate dehydrogenase [NAD(P)+] of Acidovorax sp. (strain JS42).